Consider the following 502-residue polypeptide: Zinc finger protein 3 homolog (502 aa).

Composition is skewed to basic and acidic residues over residues 1-13 and 80-93; these read MGTENKEVIPKEE and PSSEKDRENNESER. Disordered stretches follow at residues 1-26 and 47-103; these read MGTENKEVIPKEEISEESEPHGSLLE and LEGH…NLVT. Glycyl lysine isopeptide (Lys-Gly) (interchain with G-Cter in SUMO2) cross-links involve residues Lys6 and Lys11. 13 consecutive C2H2-type zinc fingers follow at residues 141–163, 169–191, 197–219, 225–247, 253–275, 281–303, 309–331, 337–359, 365–387, 393–415, 421–443, 449–471, and 477–499; these read HTCKECGKAFNQNSHLIQHMRVH, FECKECGKTFGTNSSLRRHLRIH, FACNECGKAFIQSSHLIHHHRIH, YKCEECGKAFSQNSALILHQRIH, YECNECGKTFRVSSQLIQHQRIH, HECNECGKAFKHSSGLIRHQKIH, YLCNECGKGFGQSSELIRHQRIH, YECNECGKTFGQNSEIIRHIRIH, YVCKECGKAFRGNSELLRHERIH, YECFECGKAFRRTSHLIVHQRIH, HQCNECARTFWDNSELLLHQKIH, YECSECEKTFSQHSQLIIHQRIH, and YECQECQKTFSRSSHLLRHQSVH.

This sequence belongs to the krueppel C2H2-type zinc-finger protein family.

It localises to the nucleus. May be involved in transcriptional regulation. This is Zinc finger protein 3 homolog (ZFP3) from Homo sapiens (Human).